A 747-amino-acid polypeptide reads, in one-letter code: Major facilitator superfamily domain-containing protein 6-B (747 aa).

11 consecutive transmembrane segments (helical) span residues 15–35, 75–95, 222–242, 271–291, 306–326, 391–411, 420–440, 453–470, 485–507, 520–540, and 546–566; these read LLFF…CVLQ, KAVL…IGFV, TIFL…APAV, WGIA…TIFI, IAFI…TQFH, VLFV…FLFW, TTLF…AYFI, VLYI…YISY, GLTH…PPAL, LGLG…FFGA, and GLGM…WLLG. Polar residues-rich tracts occupy residues 597-606 and 652-668; these read NQSTSQPNSD and NNDC…QTSA. Disordered stretches follow at residues 597–625 and 652–747; these read NQST…NKPA and NNDC…PTTH. Residues 675–685 are compositionally biased toward low complexity; the sequence is STSSQPNASSS.

It belongs to the major facilitator superfamily. MFSD6 family.

It localises to the membrane. This chain is Major facilitator superfamily domain-containing protein 6-B (mfsd6b), found in Danio rerio (Zebrafish).